The primary structure comprises 512 residues: Cytochrome P450 1A1 (512 aa).

The tract at residues 29 to 40 (SRPQVPKGLKNP) is mitochondrial targeting signal. The O-linked (GlcNAc) serine glycan is linked to Ser67. Phe224 contacts substrate. Cys457 lines the heme pocket.

This sequence belongs to the cytochrome P450 family. Interacts with cytosolic chaperones HSP70 and HSP90; this interaction is required for initial targeting to mitochondria. Interacts (via mitochondrial targeting signal) with TOMM40 (via N-terminus); this interaction is required for translocation across the mitochondrial outer membrane. Requires heme as cofactor. Lung, lymphocytes and placenta.

It localises to the endoplasmic reticulum membrane. It is found in the mitochondrion inner membrane. The protein resides in the microsome membrane. Its subcellular location is the cytoplasm. The enzyme catalyses an organic molecule + reduced [NADPH--hemoprotein reductase] + O2 = an alcohol + oxidized [NADPH--hemoprotein reductase] + H2O + H(+). It catalyses the reaction estrone + reduced [NADPH--hemoprotein reductase] + O2 = 2-hydroxyestrone + oxidized [NADPH--hemoprotein reductase] + H2O + H(+). It carries out the reaction estrone + reduced [NADPH--hemoprotein reductase] + O2 = 4-hydroxyestrone + oxidized [NADPH--hemoprotein reductase] + H2O + H(+). The catalysed reaction is estrone + reduced [NADPH--hemoprotein reductase] + O2 = 6alpha-hydroxyestrone + oxidized [NADPH--hemoprotein reductase] + H2O + H(+). The enzyme catalyses estrone + reduced [NADPH--hemoprotein reductase] + O2 = 15alpha-hydroxyestrone + oxidized [NADPH--hemoprotein reductase] + H2O + H(+). It catalyses the reaction estrone + reduced [NADPH--hemoprotein reductase] + O2 = 16alpha-hydroxyestrone + oxidized [NADPH--hemoprotein reductase] + H2O + H(+). It carries out the reaction 17beta-estradiol + reduced [NADPH--hemoprotein reductase] + O2 = 2-hydroxy-17beta-estradiol + oxidized [NADPH--hemoprotein reductase] + H2O + H(+). The catalysed reaction is 17beta-estradiol + reduced [NADPH--hemoprotein reductase] + O2 = 4-hydroxy-17beta-estradiol + oxidized [NADPH--hemoprotein reductase] + H2O + H(+). The enzyme catalyses 17beta-estradiol + reduced [NADPH--hemoprotein reductase] + O2 = 6alpha-hydroxy-17beta-estradiol + oxidized [NADPH--hemoprotein reductase] + H2O + H(+). It catalyses the reaction 17beta-estradiol + reduced [NADPH--hemoprotein reductase] + O2 = 7alpha-hydroxy-17beta-estradiol + oxidized [NADPH--hemoprotein reductase] + H2O + H(+). It carries out the reaction 17beta-estradiol + reduced [NADPH--hemoprotein reductase] + O2 = 15alpha-hydroxy-17beta-estradiol + oxidized [NADPH--hemoprotein reductase] + H2O + H(+). The catalysed reaction is (5Z,8Z,11Z)-eicosatrienoate + reduced [NADPH--hemoprotein reductase] + O2 = 19-hydroxy-(5Z,8Z,11Z)-eicosatrienoate + oxidized [NADPH--hemoprotein reductase] + H2O + H(+). The enzyme catalyses (5Z,8Z,11Z,14Z)-eicosatetraenoate + reduced [NADPH--hemoprotein reductase] + O2 = 16-hydroxy-(5Z,8Z,11Z,14Z)-eicosatetraenoate + oxidized [NADPH--hemoprotein reductase] + H2O + H(+). It catalyses the reaction (5Z,8Z,11Z,14Z)-eicosatetraenoate + reduced [NADPH--hemoprotein reductase] + O2 = 17-hydroxy-(5Z,8Z,11Z,14Z)-eicosatetraenoate + oxidized [NADPH--hemoprotein reductase] + H2O + H(+). It carries out the reaction (5Z,8Z,11Z,14Z)-eicosatetraenoate + reduced [NADPH--hemoprotein reductase] + O2 = 18-hydroxy-(5Z,8Z,11Z,14Z)-eicosatetraenoate + oxidized [NADPH--hemoprotein reductase] + H2O + H(+). The catalysed reaction is (5Z,8Z,11Z,14Z)-eicosatetraenoate + reduced [NADPH--hemoprotein reductase] + O2 = 19-hydroxy-(5Z,8Z,11Z,14Z)-eicosatetraenoate + oxidized [NADPH--hemoprotein reductase] + H2O + H(+). The enzyme catalyses (5Z,8Z,11Z,14Z,17Z)-eicosapentaenoate + reduced [NADPH--hemoprotein reductase] + O2 = 19-hydroxy-(5Z,8Z,11Z,14Z,17Z)-eicosapentaenoate + oxidized [NADPH--hemoprotein reductase] + H2O + H(+). It catalyses the reaction (5Z,8Z,11Z,14Z)-eicosatetraenoate + reduced [NADPH--hemoprotein reductase] + O2 = (8R,9S)-epoxy-(5Z,11Z,14Z)-eicosatrienoate + oxidized [NADPH--hemoprotein reductase] + H2O + H(+). It carries out the reaction (5Z,8Z,11Z,14Z)-eicosatetraenoate + reduced [NADPH--hemoprotein reductase] + O2 = (11R,12S)-epoxy-(5Z,8Z,14Z)-eicosatrienoate + oxidized [NADPH--hemoprotein reductase] + H2O + H(+). The catalysed reaction is (5Z,8Z,11Z,14Z)-eicosatetraenoate + reduced [NADPH--hemoprotein reductase] + O2 = (14S,15R)-epoxy-(5Z,8Z,11Z)-eicosatrienoate + oxidized [NADPH--hemoprotein reductase] + H2O + H(+). The enzyme catalyses (5Z,8Z,11Z,14Z)-eicosatetraenoate + reduced [NADPH--hemoprotein reductase] + O2 = (14R,15S)-epoxy-(5Z,8Z,11Z)-eicosatrienoate + oxidized [NADPH--hemoprotein reductase] + H2O + H(+). It catalyses the reaction (5Z,8Z,11Z,14Z,17Z)-eicosapentaenoate + reduced [NADPH--hemoprotein reductase] + O2 = (17R,18S)-epoxy-(5Z,8Z,11Z,14Z)-eicosatetraenoate + oxidized [NADPH--hemoprotein reductase] + H2O + H(+). It carries out the reaction (4Z,7Z,10Z,13Z,16Z,19Z)-docosahexaenoate + reduced [NADPH--hemoprotein reductase] + O2 = (19S,20R)-epoxy-(4Z,7Z,10Z,13Z,16Z)-docosapentaenoate + oxidized [NADPH--hemoprotein reductase] + H2O + H(+). The catalysed reaction is (4Z,7Z,10Z,13Z,16Z,19Z)-docosahexaenoate + reduced [NADPH--hemoprotein reductase] + O2 = (19R,20S)-epoxy-(4Z,7Z,10Z,13Z,16Z)-docosapentaenoate + oxidized [NADPH--hemoprotein reductase] + H2O + H(+). The enzyme catalyses all-trans-retinol + reduced [NADPH--hemoprotein reductase] + O2 = all-trans-retinal + oxidized [NADPH--hemoprotein reductase] + 2 H2O + H(+). It catalyses the reaction all-trans-retinal + reduced [NADPH--hemoprotein reductase] + O2 = all-trans-retinoate + oxidized [NADPH--hemoprotein reductase] + H2O + 2 H(+). It carries out the reaction (13S)-hydroperoxy-(9Z,11E)-octadecadienoate = 13-oxo-(9Z,11E)-octadecadienoate + H2O. The catalysed reaction is (12S)-hydroperoxy-(5Z,8Z,10E,14Z)-eicosatetraenoate = 12-oxo-(5Z,8Z,10E,14Z)-eicosatetraenoate + H2O. The enzyme catalyses (15S)-hydroperoxy-(5Z,8Z,11Z,13E)-eicosatetraenoate = 15-oxo-(5Z,8Z,11Z,13E)-eicosatetraenoate + H2O. It catalyses the reaction (5S)-hydroperoxy-(6E,8Z,11Z,14Z)-eicosatetraenoate = 5-oxo-(6E,8Z,11Z,14Z)-eicosatetraenoate + H2O. It functions in the pathway steroid hormone biosynthesis. The protein operates within lipid metabolism; fatty acid metabolism. It participates in cofactor metabolism; retinol metabolism. Its function is as follows. A cytochrome P450 monooxygenase involved in the metabolism of various endogenous substrates, including fatty acids, steroid hormones and vitamins. Mechanistically, uses molecular oxygen inserting one oxygen atom into a substrate, and reducing the second into a water molecule, with two electrons provided by NADPH via cytochrome P450 reductase (NADPH--hemoprotein reductase). Catalyzes the hydroxylation of carbon-hydrogen bonds. Exhibits high catalytic activity for the formation of hydroxyestrogens from estrone (E1) and 17beta-estradiol (E2), namely 2-hydroxy E1 and E2, as well as D-ring hydroxylated E1 and E2 at the C15-alpha and C16-alpha positions. Displays different regioselectivities for polyunsaturated fatty acids (PUFA) hydroxylation. Catalyzes the epoxidation of double bonds of certain PUFA. Converts arachidonic acid toward epoxyeicosatrienoic acid (EET) regioisomers, 8,9-, 11,12-, and 14,15-EET, that function as lipid mediators in the vascular system. Displays an absolute stereoselectivity in the epoxidation of eicosapentaenoic acid (EPA) producing the 17(R),18(S) enantiomer. May play an important role in all-trans retinoic acid biosynthesis in extrahepatic tissues. Catalyzes two successive oxidative transformation of all-trans retinol to all-trans retinal and then to the active form all-trans retinoic acid. May also participate in eicosanoids metabolism by converting hydroperoxide species into oxo metabolites (lipoxygenase-like reaction, NADPH-independent). This Homo sapiens (Human) protein is Cytochrome P450 1A1.